Consider the following 169-residue polypeptide: Disulfide bond formation protein B 1 (169 aa).

The Cytoplasmic segment spans residues 1-13; the sequence is MSALLKPLDNRLF. The helical transmembrane segment at 14 to 30 threads the bilayer; sequence WPAVAIGGLLILAFVLY. Over 31–48 the chain is Periplasmic; the sequence is LQHVRGFAPCSLCIFIRL. Cysteine 40 and cysteine 43 are oxidised to a cystine. The chain crosses the membrane as a helical span at residues 49-64; it reads DVLGLVLAGIVGSLAP. The Cytoplasmic portion of the chain corresponds to 65–71; that stretch reads RSRIAGG. The helical transmembrane segment at 72–89 threads the bilayer; the sequence is IAALGMLAASLGGIYHAW. Residues 90–145 are Periplasmic-facing; it reads SLVAEEKLAAQGMGSCKMFMGFPEWIPLDTWLPQVFQPEGLCGEVVWTLLGQSMAV. A disulfide bridge connects residues cysteine 105 and cysteine 131. Residues 146 to 164 form a helical membrane-spanning segment; that stretch reads WSLALFVFCLLVLAAKLAF. Over 165–169 the chain is Cytoplasmic; that stretch reads GRRTA.

The protein belongs to the DsbB family.

It localises to the cell inner membrane. In terms of biological role, required for disulfide bond formation in some periplasmic proteins. Acts by oxidizing the DsbA protein. In Pseudomonas aeruginosa (strain UCBPP-PA14), this protein is Disulfide bond formation protein B 1.